A 188-amino-acid polypeptide reads, in one-letter code: Elongation factor P (188 aa).

Belongs to the elongation factor P family.

Its subcellular location is the cytoplasm. The protein operates within protein biosynthesis; polypeptide chain elongation. Involved in peptide bond synthesis. Stimulates efficient translation and peptide-bond synthesis on native or reconstituted 70S ribosomes in vitro. Probably functions indirectly by altering the affinity of the ribosome for aminoacyl-tRNA, thus increasing their reactivity as acceptors for peptidyl transferase. The polypeptide is Elongation factor P (Rhodopseudomonas palustris (strain TIE-1)).